We begin with the raw amino-acid sequence, 495 residues long: Syntaphilin (495 aa).

Residues 1–74 form a disordered region; the sequence is MAMSLQGSRR…HGIKPPTPEQ (74 aa). Over residues 7 to 49 the composition is skewed to low complexity; the sequence is GSRRASAGSRRRTSPPVSVRDAYGTSSLSSSSNSGSCKGSDSS. Residues 79-161 are a coiled coil; it reads LQQKEVCIRH…VKNNLIDKDK (83 aa). The disordered stretch occupies residues 191 to 244; the sequence is VAKEEGTGESAGGSPARSLTRSSTYTKLSDPAVCGDRQPGDPSNTSAEDGADSG. Residues Ser200 and Ser204 each carry the phosphoserine modification. Residues 207–217 are compositionally biased toward polar residues; the sequence is RSLTRSSTYTK. Thr214 is subject to Phosphothreonine. At Ser219 the chain carries Phosphoserine. Thr235 bears the Phosphothreonine mark. The helical transmembrane segment at 427 to 446 threads the bilayer; it reads YIVDLLAVVVPAVPTVAWLC.

In terms of assembly, binds to STX1A. Interacts with DNM1; this interaction inhibits the binding of DNM1 to AMPH and DNM1-receptor-mediated endocytosis.

The protein resides in the membrane. The protein localises to the synapse. It localises to the synaptosome. Inhibits SNARE complex formation by absorbing free STX1A. This Mus musculus (Mouse) protein is Syntaphilin.